The following is a 542-amino-acid chain: Protein MGF 505-11L (542 aa).

Belongs to the asfivirus MGF 505 family.

Plays a role in virus cell tropism, and may be required for efficient virus replication in macrophages. This is Protein MGF 505-11L from Ornithodoros (relapsing fever ticks).